The following is a 535-amino-acid chain: Ribonuclease Y (535 aa).

A helical transmembrane segment spans residues 4 to 24 (IILLIVSALIGLILGYALISI). The tract at residues 118–141 (ENLSSKEKVLDSKEQSLTDKSKHI) is disordered. A KH domain is found at 225-285 (TITSVHLPDD…IRREIARMTL (61 aa)). The 94-residue stretch at 351-444 (VLRHSVEVGK…VAAADALSSA (94 aa)) folds into the HD domain.

It belongs to the RNase Y family.

The protein localises to the cell membrane. Functionally, endoribonuclease that initiates mRNA decay. This is Ribonuclease Y from Streptococcus pyogenes serotype M18 (strain MGAS8232).